The following is a 692-amino-acid chain: Elongation factor G (692 aa).

Residues 8–282 form the tr-type G domain; sequence ENTRNIGIMA…AVIDYLPSPL (275 aa). GTP-binding positions include 17-24, 81-85, and 135-138; these read AHIDAGKT, DTPGH, and NKMD.

This sequence belongs to the TRAFAC class translation factor GTPase superfamily. Classic translation factor GTPase family. EF-G/EF-2 subfamily.

The protein resides in the cytoplasm. Catalyzes the GTP-dependent ribosomal translocation step during translation elongation. During this step, the ribosome changes from the pre-translocational (PRE) to the post-translocational (POST) state as the newly formed A-site-bound peptidyl-tRNA and P-site-bound deacylated tRNA move to the P and E sites, respectively. Catalyzes the coordinated movement of the two tRNA molecules, the mRNA and conformational changes in the ribosome. This chain is Elongation factor G, found in Bacillus cereus (strain ZK / E33L).